Reading from the N-terminus, the 347-residue chain is Ribosomal RNA large subunit methyltransferase M (347 aa).

Residues serine 184, 217-220, aspartate 236, aspartate 256, and aspartate 272 contribute to the S-adenosyl-L-methionine site; that span reads APGG. Lysine 301 (proton acceptor) is an active-site residue.

The protein belongs to the class I-like SAM-binding methyltransferase superfamily. RNA methyltransferase RlmE family. RlmM subfamily. Monomer.

The protein resides in the cytoplasm. It carries out the reaction cytidine(2498) in 23S rRNA + S-adenosyl-L-methionine = 2'-O-methylcytidine(2498) in 23S rRNA + S-adenosyl-L-homocysteine + H(+). Catalyzes the 2'-O-methylation at nucleotide C2498 in 23S rRNA. The protein is Ribosomal RNA large subunit methyltransferase M of Xanthomonas oryzae pv. oryzae (strain MAFF 311018).